A 446-amino-acid chain; its full sequence is Exodeoxyribonuclease 7 large subunit (446 aa).

Belongs to the XseA family. In terms of assembly, heterooligomer composed of large and small subunits.

The protein localises to the cytoplasm. The catalysed reaction is Exonucleolytic cleavage in either 5'- to 3'- or 3'- to 5'-direction to yield nucleoside 5'-phosphates.. In terms of biological role, bidirectionally degrades single-stranded DNA into large acid-insoluble oligonucleotides, which are then degraded further into small acid-soluble oligonucleotides. In Streptococcus pneumoniae (strain ATCC 700669 / Spain 23F-1), this protein is Exodeoxyribonuclease 7 large subunit.